A 788-amino-acid chain; its full sequence is Spastin (788 aa).

The segment at 1–105 (MVRTKNQSSS…PRSAGGPSSV (105 aa)) is disordered. Topologically, residues 1–116 (MVRTKNQSSS…KQNLYVVSFP (116 aa)) are cytoplasmic. The tract at residues 1–227 (MVRTKNQSSS…NRSGSGYSPG (227 aa)) is required for localization to punctate cytoplasmic foci. 2 stretches are compositionally biased toward low complexity: residues 8–48 (SSSS…SSHR) and 57–75 (ATNV…SSPD). The helical intramembrane region spans 117–137 (IIFLFNVLRSLIYQLFCIFRY). Residues 138-788 (LYGASTKVIY…WSSDYGDITI (651 aa)) lie on the Cytoplasmic side of the membrane. The interval 227–788 (GPGDPLLAKQ…WSSDYGDITI (562 aa)) is sufficient for interaction with microtubules and microtubule severing. Residues 240–315 (HRRAFEYISK…SMARDRLHFL (76 aa)) enclose the MIT domain. The segment covering 331-353 (EKQKANESREQQQKPQKAREAAD) has biased composition (basic and acidic residues). The tract at residues 331–484 (EKQKANESRE…SGSGSGASTP (154 aa)) is disordered. The span at 387 to 400 (ATATTPTSSSSLAS) shows a compositional bias: low complexity. Composition is skewed to polar residues over residues 419 to 433 (NKSQ…SKTS) and 453 to 469 (QFSS…RTPI). Positions 471–485 (NNGASGSGSGASTPV) are required for interaction with microtubules. 553–560 (GPPGNGKT) provides a ligand contact to ATP.

This sequence belongs to the AAA ATPase family. Spastin subfamily. Homohexamer. The homohexamer is stabilized by ATP-binding. The homohexamer may adopt a ring conformation through which microtubules pass prior to being severed. Interacts with microtubules. Interacts with atl; may be involved in microtubule dynamics.

It is found in the membrane. The protein resides in the cytoplasm. The protein localises to the cytoskeleton. Its subcellular location is the microtubule organizing center. It localises to the centrosome. It is found in the chromosome. The protein resides in the lipid droplet. The enzyme catalyses n ATP + n H2O + a microtubule = n ADP + n phosphate + (n+1) alpha/beta tubulin heterodimers.. ATP-dependent microtubule severing protein. Stimulates microtubule minus-end depolymerization and poleward microtubule flux in the mitotic spindle. Regulates microtubule stability in the neuromuscular junction synapse. Involved in lipid metabolism by regulating the size and distribution of lipid droplets. Involved in axon regeneration by regulating microtubule severing. The protein is Spastin of Drosophila persimilis (Fruit fly).